The primary structure comprises 269 residues: Shikimate dehydrogenase (NADP(+)) (269 aa).

Residues Ser-17–Ser-19 and Thr-64 contribute to the shikimate site. Residue Lys-68 is the Proton acceptor of the active site. Asp-80 contacts NADP(+). The shikimate site is built by Asn-89 and Asp-105. Residues Gly-130 to Ala-134, Asn-154 to Lys-159, and Met-213 each bind NADP(+). Position 215 (Tyr-215) interacts with shikimate. Gly-237 provides a ligand contact to NADP(+).

This sequence belongs to the shikimate dehydrogenase family. Homodimer.

The catalysed reaction is shikimate + NADP(+) = 3-dehydroshikimate + NADPH + H(+). The protein operates within metabolic intermediate biosynthesis; chorismate biosynthesis; chorismate from D-erythrose 4-phosphate and phosphoenolpyruvate: step 4/7. In terms of biological role, involved in the biosynthesis of the chorismate, which leads to the biosynthesis of aromatic amino acids. Catalyzes the reversible NADPH linked reduction of 3-dehydroshikimate (DHSA) to yield shikimate (SA). The sequence is that of Shikimate dehydrogenase (NADP(+)) from Neisseria polysaccharea.